Here is a 943-residue protein sequence, read N- to C-terminus: Translation initiation factor IF-2 (943 aa).

The tract at residues 29–357 is disordered; that stretch reads LSVKSHSSSV…KPVTERKFHE (329 aa). Basic and acidic residues-rich tracts occupy residues 69 to 82, 112 to 137, 145 to 155, 163 to 196, and 224 to 253; these read PKEE…DKAS, FKAE…DNRN, QGKRHNNDRRN, DHNK…RDNA, and RQSE…EKQQ. A compositionally biased stretch (low complexity) spans 254–266; it reads AEVAVQKAAAETK. A compositionally biased stretch (basic and acidic residues) spans 296–309; that stretch reads KSRDNRRVNEDGPK. Low complexity predominate over residues 313–332; it reads NNKWNNQNQVRNQRNSNWNK. Residues 445 to 614 form the tr-type G domain; sequence ERAPVVTIMG…LLVAEVEELK (170 aa). The G1 stretch occupies residues 454 to 461; the sequence is GHVDHGKT. Residue 454–461 participates in GTP binding; the sequence is GHVDHGKT. The interval 479-483 is G2; sequence GITQH. The G3 stretch occupies residues 500–503; that stretch reads DTPG. GTP-binding positions include 500–504 and 554–557; these read DTPGH and NKID. The segment at 554–557 is G4; it reads NKID. The tract at residues 590 to 592 is G5; that stretch reads SAK.

Belongs to the TRAFAC class translation factor GTPase superfamily. Classic translation factor GTPase family. IF-2 subfamily.

It localises to the cytoplasm. Functionally, one of the essential components for the initiation of protein synthesis. Protects formylmethionyl-tRNA from spontaneous hydrolysis and promotes its binding to the 30S ribosomal subunits. Also involved in the hydrolysis of GTP during the formation of the 70S ribosomal complex. This Streptococcus thermophilus (strain CNRZ 1066) protein is Translation initiation factor IF-2.